Reading from the N-terminus, the 254-residue chain is Small ribosomal subunit protein uS2 (254 aa).

The interval D228–E254 is disordered. Over residues E240–E254 the composition is skewed to low complexity.

Belongs to the universal ribosomal protein uS2 family.

The chain is Small ribosomal subunit protein uS2 from Flavobacterium johnsoniae (strain ATCC 17061 / DSM 2064 / JCM 8514 / BCRC 14874 / CCUG 350202 / NBRC 14942 / NCIMB 11054 / UW101) (Cytophaga johnsonae).